A 695-amino-acid polypeptide reads, in one-letter code: Polyribonucleotide nucleotidyltransferase (695 aa).

D486 and D492 together coordinate Mg(2+). Residues 553 to 612 (PRIETMQINTSKIATVIGPGGKQIRQIIERSGAQVDINDDGVINIAASTQESINKAKELI) enclose the KH domain. An S1 motif domain is found at 622-690 (GKVYNGRVTS…EKGQLKLSHK (69 aa)).

Belongs to the polyribonucleotide nucleotidyltransferase family. It depends on Mg(2+) as a cofactor.

It localises to the cytoplasm. The enzyme catalyses RNA(n+1) + phosphate = RNA(n) + a ribonucleoside 5'-diphosphate. In terms of biological role, involved in mRNA degradation. Catalyzes the phosphorolysis of single-stranded polyribonucleotides processively in the 3'- to 5'-direction. The chain is Polyribonucleotide nucleotidyltransferase from Chlamydia trachomatis serovar L2 (strain ATCC VR-902B / DSM 19102 / 434/Bu).